The following is a 156-amino-acid chain: Methylated-DNA--protein-cysteine methyltransferase (156 aa).

Cys120 acts as the Nucleophile; methyl group acceptor in catalysis.

It belongs to the MGMT family.

The protein resides in the cytoplasm. It carries out the reaction a 6-O-methyl-2'-deoxyguanosine in DNA + L-cysteinyl-[protein] = S-methyl-L-cysteinyl-[protein] + a 2'-deoxyguanosine in DNA. The enzyme catalyses a 4-O-methyl-thymidine in DNA + L-cysteinyl-[protein] = a thymidine in DNA + S-methyl-L-cysteinyl-[protein]. Functionally, involved in the cellular defense against the biological effects of O6-methylguanine (O6-MeG) and O4-methylthymine (O4-MeT) in DNA. Repairs the methylated nucleobase in DNA by stoichiometrically transferring the methyl group to a cysteine residue in the enzyme. This is a suicide reaction: the enzyme is irreversibly inactivated. The protein is Methylated-DNA--protein-cysteine methyltransferase of Sulfurisphaera tokodaii (strain DSM 16993 / JCM 10545 / NBRC 100140 / 7) (Sulfolobus tokodaii).